The chain runs to 241 residues: Leucyl/phenylalanyl-tRNA--protein transferase (241 aa).

This sequence belongs to the L/F-transferase family.

Its subcellular location is the cytoplasm. The enzyme catalyses N-terminal L-lysyl-[protein] + L-leucyl-tRNA(Leu) = N-terminal L-leucyl-L-lysyl-[protein] + tRNA(Leu) + H(+). The catalysed reaction is N-terminal L-arginyl-[protein] + L-leucyl-tRNA(Leu) = N-terminal L-leucyl-L-arginyl-[protein] + tRNA(Leu) + H(+). It carries out the reaction L-phenylalanyl-tRNA(Phe) + an N-terminal L-alpha-aminoacyl-[protein] = an N-terminal L-phenylalanyl-L-alpha-aminoacyl-[protein] + tRNA(Phe). Functionally, functions in the N-end rule pathway of protein degradation where it conjugates Leu, Phe and, less efficiently, Met from aminoacyl-tRNAs to the N-termini of proteins containing an N-terminal arginine or lysine. The polypeptide is Leucyl/phenylalanyl-tRNA--protein transferase (Neisseria meningitidis serogroup B (strain ATCC BAA-335 / MC58)).